The following is a 487-amino-acid chain: Glutamate--tRNA ligase (487 aa).

A 'HIGH' region motif is present at residues 12–22; sequence PSPTGYMHVGN. Positions 249–253 match the 'KMSKS' region motif; the sequence is KLSKR. Lys252 provides a ligand contact to ATP.

This sequence belongs to the class-I aminoacyl-tRNA synthetase family. Glutamate--tRNA ligase type 1 subfamily. In terms of assembly, monomer.

Its subcellular location is the cytoplasm. It carries out the reaction tRNA(Glu) + L-glutamate + ATP = L-glutamyl-tRNA(Glu) + AMP + diphosphate. Functionally, catalyzes the attachment of glutamate to tRNA(Glu) in a two-step reaction: glutamate is first activated by ATP to form Glu-AMP and then transferred to the acceptor end of tRNA(Glu). This chain is Glutamate--tRNA ligase, found in Clostridium novyi (strain NT).